The chain runs to 219 residues: Small ribosomal subunit protein uS3 (219 aa).

The KH type-2 domain maps to I38–K107.

Belongs to the universal ribosomal protein uS3 family. Part of the 30S ribosomal subunit. Forms a tight complex with proteins S10 and S14.

Binds the lower part of the 30S subunit head. Binds mRNA in the 70S ribosome, positioning it for translation. This is Small ribosomal subunit protein uS3 from Exiguobacterium sp. (strain ATCC BAA-1283 / AT1b).